Reading from the N-terminus, the 1073-residue chain is Serine/threonine-protein phosphatase 6 regulatory ankyrin repeat subunit C (1073 aa).

ANK repeat units follow at residues 7 to 36 (TDQPPLVQAIFNRDVEEVRSLLNQKENINV), 40 to 69 (ERRTPLHTAAYIGDVAILELLILSGANVNA), 73 to 102 (VWLTPLHRAAASRNEKALHLLLKHSADVNA), 106 to 135 (YWQTPLHVAAANRATKCVEAIIPLLSTVNV), 139 to 168 (TGRTALHHAVHSGHLEMVNLLLNKGASLST), 172 to 201 (KDRQPIHWAAFLGHLEVLKLLVARGADVMC), 205 to 234 (KGYTLLHTAAASGQIEVVRHLLRLGVEIDE), 238 to 267 (FGNTALHIACYMGQDAVANELVNYGANVNQ), 271 to 301 (KGFTPLHFAAVSTNGALCLELLVNNGADVNF), 305 to 334 (EGKSPLHMAAIHGRFTRSQILIQNGSEIDC), 338 to 367 (YGNTPLHVAARYGHELLISTLMTNGADTAR), 371 to 400 (HDMFPLHLAVLFGFSDCCRKLLSSGQLYSI), 422 to 451 (LGRTCLHAAASGGNVECLNLLLSSGADLRR), 455 to 484 (FGRTPLHYAAANGSYQCTVTLVTAGASINE), 488 to 544 (KGCT…DPSL), 548 to 578 (QGYTAVHYAAAYGNRQNLELLLEMSFNCLED), 583 to 612 (IPVSPLHLAAYNGHCEALKTLAETLVNLDV), 616 to 645 (KGRTALYLATERGSTECVEVLTSHGASALV), 650 to 679 (RKWTPLHAAAANGNTDSLHLLIDSGERADI), 686 to 715 (HGQTPLMLAIMNGHVDCVHLLLEKGSTADA), 719 to 748 (RGRTALHRGAVTGCEDCLAALLDHDAFVLC), 752 to 781 (KGRTPIHFASACGHLEILRTLLQAALSTDP), 789 to 818 (SGYSPMHWASYSGHEDCLELLLEHNPFAYL), 821 to 851 (NPFTPLHCAVINNQDSTAEMLVEALGAKIVN), 856 to 885 (KGRTPLHAAAFADNIHGLQLLLRHQAEVDT), 889 to 919 (LGRTPLMMASENGHTAAVEFLLYQAKANITV), 923 to 952 (NKNTALHLACSKGHEKCALLILGETQDLGL), and 959 to 988 (ALQMPLHIAARNGLATVVQALLSRGATVLA).

As to quaternary structure, protein phosphatase 6 (PP6) holoenzyme is proposed to be a heterotrimeric complex formed by the catalytic subunit, a SAPS domain-containing subunit (PP6R) and an ankyrin repeat-domain containing regulatory subunit (ARS).

Functionally, putative regulatory subunit of protein phosphatase 6 (PP6) that may be involved in the recognition of phosphoprotein substrates. This Gallus gallus (Chicken) protein is Serine/threonine-protein phosphatase 6 regulatory ankyrin repeat subunit C (ANKRD52).